Here is a 311-residue protein sequence, read N- to C-terminus: Aspartate carbamoyltransferase catalytic subunit (311 aa).

Carbamoyl phosphate is bound by residues Arg-55 and Thr-56. Lys-85 is an L-aspartate binding site. Carbamoyl phosphate contacts are provided by Arg-106, His-135, and Gln-138. Residues Arg-168 and Arg-230 each contribute to the L-aspartate site. Carbamoyl phosphate contacts are provided by Leu-268 and Pro-269.

This sequence belongs to the aspartate/ornithine carbamoyltransferase superfamily. ATCase family. As to quaternary structure, heterododecamer (2C3:3R2) of six catalytic PyrB chains organized as two trimers (C3), and six regulatory PyrI chains organized as three dimers (R2).

The catalysed reaction is carbamoyl phosphate + L-aspartate = N-carbamoyl-L-aspartate + phosphate + H(+). Its pathway is pyrimidine metabolism; UMP biosynthesis via de novo pathway; (S)-dihydroorotate from bicarbonate: step 2/3. Its function is as follows. Catalyzes the condensation of carbamoyl phosphate and aspartate to form carbamoyl aspartate and inorganic phosphate, the committed step in the de novo pyrimidine nucleotide biosynthesis pathway. The sequence is that of Aspartate carbamoyltransferase catalytic subunit from Citrobacter koseri (strain ATCC BAA-895 / CDC 4225-83 / SGSC4696).